The sequence spans 375 residues: tRNA-specific 2-thiouridylase MnmA (375 aa).

ATP contacts are provided by residues 12–19 and Met-38; that span reads GMSGGVDS. Residues 98 to 100 form an interaction with target base in tRNA region; the sequence is NPD. Cys-103 acts as the Nucleophile in catalysis. Cysteines 103 and 200 form a disulfide. Gly-127 serves as a coordination point for ATP. Residues 150–152 form an interaction with tRNA region; the sequence is KDQ. Cys-200 functions as the Cysteine persulfide intermediate in the catalytic mechanism. The tract at residues 312–313 is interaction with tRNA; that stretch reads RY.

The protein belongs to the MnmA/TRMU family.

Its subcellular location is the cytoplasm. The enzyme catalyses S-sulfanyl-L-cysteinyl-[protein] + uridine(34) in tRNA + AH2 + ATP = 2-thiouridine(34) in tRNA + L-cysteinyl-[protein] + A + AMP + diphosphate + H(+). Functionally, catalyzes the 2-thiolation of uridine at the wobble position (U34) of tRNA, leading to the formation of s(2)U34. The sequence is that of tRNA-specific 2-thiouridylase MnmA from Lactobacillus helveticus (strain DPC 4571).